The sequence spans 92 residues: Small ribosomal subunit protein uS19c (92 aa).

Positions 73–92 (EFSPTRTYRGHAKKDKKAKR) are disordered. Positions 80–92 (YRGHAKKDKKAKR) are enriched in basic residues.

The protein belongs to the universal ribosomal protein uS19 family.

Its subcellular location is the plastid. The protein resides in the chloroplast. Its function is as follows. Protein S19 forms a complex with S13 that binds strongly to the 16S ribosomal RNA. The sequence is that of Small ribosomal subunit protein uS19c (rps19) from Chlamydomonas reinhardtii (Chlamydomonas smithii).